A 656-amino-acid chain; its full sequence is Translation factor GUF1, mitochondrial (656 aa).

Residues 1–28 (MWKGLLQSTRAAWRGPCVRAPRLPFFRR) constitute a mitochondrion transit peptide. Residues 55-235 (ERYRNFSIVA…NVIENIPGPD (181 aa)) form the tr-type G domain. GTP is bound by residues 64–71 (AHVDHGKS), 128–132 (DTPGH), and 182–185 (NKID).

Belongs to the TRAFAC class translation factor GTPase superfamily. Classic translation factor GTPase family. LepA subfamily.

The protein resides in the mitochondrion inner membrane. It carries out the reaction GTP + H2O = GDP + phosphate + H(+). Its function is as follows. Promotes mitochondrial protein synthesis. May act as a fidelity factor of the translation reaction, by catalyzing a one-codon backward translocation of tRNAs on improperly translocated ribosomes. Binds to mitochondrial ribosomes in a GTP-dependent manner. The polypeptide is Translation factor GUF1, mitochondrial (Yarrowia lipolytica (strain CLIB 122 / E 150) (Yeast)).